The sequence spans 231 residues: DNA mismatch repair protein MutH (231 aa).

This sequence belongs to the MutH family.

It is found in the cytoplasm. Functionally, sequence-specific endonuclease that cleaves unmethylated GATC sequences. It is involved in DNA mismatch repair. The polypeptide is DNA mismatch repair protein MutH (Salmonella enteritidis PT4 (strain P125109)).